A 294-amino-acid polypeptide reads, in one-letter code: Pyridoxal 5'-phosphate synthase subunit PdxS (294 aa).

Aspartate 24 provides a ligand contact to D-ribose 5-phosphate. Lysine 81 acts as the Schiff-base intermediate with D-ribose 5-phosphate in catalysis. Glycine 153 is a binding site for D-ribose 5-phosphate. Arginine 165 lines the D-glyceraldehyde 3-phosphate pocket. Residues glycine 214 and 235–236 each bind D-ribose 5-phosphate; that span reads GS.

It belongs to the PdxS/SNZ family. In the presence of PdxT, forms a dodecamer of heterodimers.

It carries out the reaction aldehydo-D-ribose 5-phosphate + D-glyceraldehyde 3-phosphate + L-glutamine = pyridoxal 5'-phosphate + L-glutamate + phosphate + 3 H2O + H(+). Its pathway is cofactor biosynthesis; pyridoxal 5'-phosphate biosynthesis. In terms of biological role, catalyzes the formation of pyridoxal 5'-phosphate from ribose 5-phosphate (RBP), glyceraldehyde 3-phosphate (G3P) and ammonia. The ammonia is provided by the PdxT subunit. Can also use ribulose 5-phosphate and dihydroxyacetone phosphate as substrates, resulting from enzyme-catalyzed isomerization of RBP and G3P, respectively. The sequence is that of Pyridoxal 5'-phosphate synthase subunit PdxS from Bacillus licheniformis (strain ATCC 14580 / DSM 13 / JCM 2505 / CCUG 7422 / NBRC 12200 / NCIMB 9375 / NCTC 10341 / NRRL NRS-1264 / Gibson 46).